The primary structure comprises 486 residues: uncharacterized protein (486 aa).

9 LRR repeats span residues 18-39 (NLKKIIINRDNVININILKKLV), 43-59 (ELHIIYYDNNILNNIPE), 60-81 (NIKSLYISNLNIINLNFITKLK), 82-103 (NITYLDISYNKNSNISNIILPH), 104-125 (SIEFLNCESCNINDYNFINNLV), 126-147 (NLKKLIISKNKFGNFNNVFPIS), 148-168 (IVELNMESIQIKDYKFIEKLI), 169-190 (NLKKLDISFNVKKNNIHLIKFP), and 198-219 (DYQSYKENYNYLKNLSNIIEYE).

This is an uncharacterized protein from Amsacta moorei entomopoxvirus (AmEPV).